The chain runs to 275 residues: NH(3)-dependent NAD(+) synthetase (275 aa).

46–53 (GISGGQDS) is an ATP binding site. Aspartate 52 lines the Mg(2+) pocket. Arginine 140 contacts deamido-NAD(+). Residue threonine 160 coordinates ATP. Glutamate 165 lines the Mg(2+) pocket. The deamido-NAD(+) site is built by lysine 173 and aspartate 180. Residues lysine 189 and threonine 211 each contribute to the ATP site. 260–261 (HK) contributes to the deamido-NAD(+) binding site.

This sequence belongs to the NAD synthetase family. In terms of assembly, homodimer.

It carries out the reaction deamido-NAD(+) + NH4(+) + ATP = AMP + diphosphate + NAD(+) + H(+). The protein operates within cofactor biosynthesis; NAD(+) biosynthesis; NAD(+) from deamido-NAD(+) (ammonia route): step 1/1. Functionally, catalyzes the ATP-dependent amidation of deamido-NAD to form NAD. Uses ammonia as a nitrogen source. The polypeptide is NH(3)-dependent NAD(+) synthetase (Salmonella choleraesuis (strain SC-B67)).